A 216-amino-acid chain; its full sequence is MTKLTARQQQVFDLIRRAIERTGFPPTRAEIAAELGFSSANSAEEHLRALARKGVIELAAGASRGIRLLAGPEDSPHQFTLPHASIMQLSLPLIGRVAAGSPILAQEHISQHYACDPALFSSKPDYLLKVRGLSMRDAGIFDGDLLAVQKRSEAKDGQIIIARLGDDVTVKRLKRRPNGLELIAENPDYENIFVETGSAEFALEGIAVGLIRPGEF.

The H-T-H motif DNA-binding region spans R28–R48. Catalysis depends on for autocatalytic cleavage activity residues S134 and K171.

It belongs to the peptidase S24 family. As to quaternary structure, homodimer.

It carries out the reaction Hydrolysis of Ala-|-Gly bond in repressor LexA.. Functionally, represses a number of genes involved in the response to DNA damage (SOS response), including recA and lexA. In the presence of single-stranded DNA, RecA interacts with LexA causing an autocatalytic cleavage which disrupts the DNA-binding part of LexA, leading to derepression of the SOS regulon and eventually DNA repair. The protein is LexA repressor of Paraburkholderia phytofirmans (strain DSM 17436 / LMG 22146 / PsJN) (Burkholderia phytofirmans).